A 319-amino-acid chain; its full sequence is MEPILAPNPNRFVIFPIQYHDIWNMYKKAEASFWTVEEVDISKDINDWNKLTPDEKYFIKHVLAFFAASDGIVNENLAERFCTEVQITEARCFYGFQMAIENIHSEMYSLLIDTYVKDSNEKNYLFNAIETMPCVKKKADWAQKWIHDSAGYGERLIAFAAVEGIFFSGSFASIFWLKKRGLMPGLTFSNELISRDEGLHCDFACLMFKHLLHPPSEETVRFIITNAVSIEQEFLTVALPVKLIGMNCEMMKTYIEFVADRLISELGFKKIYNVTNPFDFMENISLEGKTNFFEKRVGEYQKMGVMSQEDNHFSLDVDF.

The tract at residues 313–319 is interaction with R1; that stretch reads FSLDVDF.

This sequence belongs to the ribonucleoside diphosphate reductase small chain family. Interacts with RNR1/OPG080 subunit. Can interact with host RNR1 supunit. Requires Fe cation as cofactor.

The catalysed reaction is a 2'-deoxyribonucleoside 5'-diphosphate + [thioredoxin]-disulfide + H2O = a ribonucleoside 5'-diphosphate + [thioredoxin]-dithiol. Its function is as follows. Ribonucleoside-diphosphate reductase holoenzyme provides the precursors necessary for viral DNA synthesis. Allows virus growth in non-dividing cells. Catalyzes the biosynthesis of deoxyribonucleotides from the corresponding ribonucleotides. The polypeptide is Ribonucleoside-diphosphate reductase small chain (OPG048) (Cynomys gunnisoni (Gunnison's prairie dog)).